A 472-amino-acid chain; its full sequence is Membrane-bound acylglycerophosphatidylinositol O-acyltransferase MBOAT7 (472 aa).

The Cytoplasmic portion of the chain corresponds to 1–5 (MSPEE). Residues 6-22 (WTYLVVLLISIPIGFLF) traverse the membrane as a helical segment. The Lumenal portion of the chain corresponds to 23–33 (KKAGPGLKRWG). Residues 34-57 (AAAVGLGLTLFTCGPHTLHSLVTI) traverse the membrane as a helical segment. Residues 58-73 (LGTWALIQAQPCSCHA) lie on the Cytoplasmic side of the membrane. Residues 74–93 (LALAWTFSYLLFFRALSLLG) traverse the membrane as a helical segment. Topologically, residues 94 to 194 (LPTPTPFTNA…VPSLRPLLRR (101 aa)) are lumenal. Residues 195 to 212 (AWPAPLFGLLFLLSSHLF) traverse the membrane as a helical segment. The Cytoplasmic segment spans residues 213 to 231 (PLEAVREDAFYARPLPARL). A helical transmembrane segment spans residues 232–261 (FYMIPVFFAFRMRFYVAWIAAECGCIAAGF). The Lumenal segment spans residues 262–426 (GAYPVAAKAR…LSLRDTLRYW (165 aa)). N-linked (GlcNAc...) asparagine glycosylation is present at N321. A helical transmembrane segment spans residues 427–447 (ASVYFCVHVLALAALGLGLAL). Over 448 to 472 (GRGGPGRRKSGAPAPSPASGKLREE) the chain is Cytoplasmic. Residues 450–472 (GGPGRRKSGAPAPSPASGKLREE) form a disordered region.

The protein belongs to the membrane-bound acyltransferase family. Interacts with SPTSSA; the interaction facilitates MBOAT7 location to mitochondria-associated membranes (MAMs).

Its subcellular location is the endoplasmic reticulum membrane. The catalysed reaction is a 1-acyl-sn-glycero-3-phospho-(1D-myo-inositol) + an acyl-CoA = a 1,2-diacyl-sn-glycero-3-phospho-(1D-myo-inositol) + CoA. It catalyses the reaction a 1-acyl-sn-glycero-3-phospho-(1D-myo-inositol) + (5Z,8Z,11Z,14Z)-eicosatetraenoyl-CoA = a 1-acyl-2-(5Z,8Z,11Z,14Z-eicosatetraenoyl)-sn-glycero-3-phospho-(1D-myo-inositol) + CoA. The enzyme catalyses (5Z,8Z,11Z,14Z)-eicosatetraenoyl-CoA + 1-hexadecanoyl-sn-glycero-3-phosphocholine = 1-hexadecanoyl-2-(5Z,8Z,11Z,14Z-eicosatetraenoyl)-sn-glycero-3-phosphocholine + CoA. It carries out the reaction 1-octadecanoyl-sn-glycero-3-phospho-(1D-myo-inositol) + (5Z,8Z,11Z,14Z)-eicosatetraenoyl-CoA = 1-octadecanoyl-2-(5Z,8Z,11Z,14Z-eicosatetraenoyl)-sn-glycero-3-phospho-(1D-myo-inositol) + CoA. Its pathway is lipid metabolism; phospholipid metabolism. In terms of biological role, acyltransferase which catalyzes the transfer of an acyl group from an acyl-CoA to a lysophosphatidylinositol (1-acylglycerophosphatidylinositol or LPI) leading to the production of a phosphatidylinositol (1,2-diacyl-sn-glycero-3-phosphoinositol or PI) and participates in the reacylation step of the phospholipid remodeling pathway also known as the Lands cycle. Prefers arachidonoyl-CoA as the acyl donor, thus contributing to the regulation of free levels arachidonic acid in cell. In liver, participates in the regulation of triglyceride metabolism through the phosphatidylinositol acyl-chain remodeling regulation. The protein is Membrane-bound acylglycerophosphatidylinositol O-acyltransferase MBOAT7 (MBOAT7) of Bos taurus (Bovine).